We begin with the raw amino-acid sequence, 438 residues long: MSQANAATKAYSDVFFNASLEDIDPEIFGAIRNELGRQRHEIELIASENIVSRAVLEAQGSILTNKYAEGYPGKRYYGGCQYVDVVEELAIERAKKLFGAEFANVQPNSGSQMNQAVFLALLQPGDTFMGLDLNSGGHLTHGSPVNMSGKWFNVVSYGVRKDDHLLDMDEVARLARENKPKLILAGGTAYSRIWDWKRFREIADEVGAYLMVDMAHIAGLVAGGQHPSPVPHAHVCTTTTHKSLRGPRGGMILTNDADIAKKINSAVFPGLQGGPLMHVIAGKAVAFAEALKPEFKLYAKNVVDNARALAEELKSHGLDIVSGGTDNHLMLVDLRPKNATGKRAEAALGRANITCNKNGIPFDPEKPFVTSGVRLGTPAGTTRGFGVAEFKEIGSLIAEVLDGLKVANSDEGNAAVEQAVKEKVIALTGRFPMYGYQG.

(6S)-5,6,7,8-tetrahydrofolate-binding positions include L133 and 137 to 139 (GHL). The residue at position 242 (K242) is an N6-(pyridoxal phosphate)lysine.

This sequence belongs to the SHMT family. Homodimer. The cofactor is pyridoxal 5'-phosphate.

Its subcellular location is the cytoplasm. It carries out the reaction (6R)-5,10-methylene-5,6,7,8-tetrahydrofolate + glycine + H2O = (6S)-5,6,7,8-tetrahydrofolate + L-serine. Its pathway is one-carbon metabolism; tetrahydrofolate interconversion. It functions in the pathway amino-acid biosynthesis; glycine biosynthesis; glycine from L-serine: step 1/1. Its function is as follows. Catalyzes the reversible interconversion of serine and glycine with tetrahydrofolate (THF) serving as the one-carbon carrier. This reaction serves as the major source of one-carbon groups required for the biosynthesis of purines, thymidylate, methionine, and other important biomolecules. Also exhibits THF-independent aldolase activity toward beta-hydroxyamino acids, producing glycine and aldehydes, via a retro-aldol mechanism. The protein is Serine hydroxymethyltransferase of Brucella abortus (strain S19).